We begin with the raw amino-acid sequence, 534 residues long: 26S proteasome non-ATPase regulatory subunit 3 (534 aa).

Positions 1-16 (MKQEGSARRRGADKAK) are enriched in basic and acidic residues. The tract at residues 1-68 (MKQEGSARRR…AAEHSQRELD (68 aa)) is disordered. The segment covering 17–32 (PPPGGGEQEPPPPPAP) has biased composition (pro residues). A Glycyl lysine isopeptide (Lys-Gly) (interchain with G-Cter in SUMO1); alternate cross-link involves residue Lys-38. Lys-38 participates in a covalent cross-link: Glycyl lysine isopeptide (Lys-Gly) (interchain with G-Cter in SUMO2); alternate. Low complexity predominate over residues 49 to 61 (GETAGKTAAAAAE). The PCI domain occupies 286 to 465 (ARYLYYTGRI…GYVQSKEMID (180 aa)). 2 positions are modified to phosphoserine: Ser-418 and Ser-430. The interval 500 to 534 (SYNKDLESAEERREREQQDLEFAKEMAEDDDDSFP) is disordered. The segment covering 501–525 (YNKDLESAEERREREQQDLEFAKEM) has biased composition (basic and acidic residues).

Belongs to the proteasome subunit S3 family. As to quaternary structure, component of the 19S proteasome regulatory particle complex. The 26S proteasome consists of a 20S core particle (CP) and two 19S regulatory subunits (RP). The regulatory particle is made of a lid composed of 9 subunits including PSMD3, a base containing 6 ATPases and few additional components. Interacts with UBQLN1 (via ubiquitin-like domain). Interacts with ERCC6.

Component of the 26S proteasome, a multiprotein complex involved in the ATP-dependent degradation of ubiquitinated proteins. This complex plays a key role in the maintenance of protein homeostasis by removing misfolded or damaged proteins, which could impair cellular functions, and by removing proteins whose functions are no longer required. Therefore, the proteasome participates in numerous cellular processes, including cell cycle progression, apoptosis, or DNA damage repair. The polypeptide is 26S proteasome non-ATPase regulatory subunit 3 (PSMD3) (Bos taurus (Bovine)).